We begin with the raw amino-acid sequence, 554 residues long: L-ascorbate oxidase homolog (554 aa).

A signal peptide spans 1–21 (MGSGKVTFVALLLCLSVGVIA). 2 Plastocyanin-like domains span residues 22–143 (EDPY…LNVH) and 196–296 (SAKV…AIIR). 3 N-linked (GlcNAc...) asparagine glycosylation sites follow: Asn31, Asn59, and Asn108. Cysteines 101 and 540 form a disulfide. N-linked (GlcNAc...) asparagine glycans are attached at residues Asn332, Asn352, and Asn423. The Plastocyanin-like 3 domain maps to 411-521 (DPSKLTIATN…LGEQLYFSVL (111 aa)).

This sequence belongs to the multicopper oxidase family. In terms of tissue distribution, pollen.

Its subcellular location is the secreted. It localises to the extracellular space. Functionally, probable oxidoreductase that may be involved in pollen tube growth. This chain is L-ascorbate oxidase homolog, found in Nicotiana tabacum (Common tobacco).